A 310-amino-acid chain; its full sequence is Acetaldehyde dehydrogenase 1 (310 aa).

12-15 (SGNI) is an NAD(+) binding site. The active-site Acyl-thioester intermediate is the C132. Residues 163–171 (SAGPGTRAN) and N287 contribute to the NAD(+) site.

Belongs to the acetaldehyde dehydrogenase family.

It catalyses the reaction acetaldehyde + NAD(+) + CoA = acetyl-CoA + NADH + H(+). The protein is Acetaldehyde dehydrogenase 1 of Pseudomonas putida (strain W619).